The chain runs to 147 residues: Membrane-spanning 4-domains subfamily A member 6E (147 aa).

Residues 1-52 (MTSQPISNETIIMLPSNVINFSQAEKPEPTNQGQDSLKKRLQAKVKVIGVHS) are Cytoplasmic-facing. A helical transmembrane segment spans residues 53 to 73 (SLAGSILSALSALVGFILLSV). At 74 to 120 (NPAALNPASLQCKLDEKDIPTRLLLSYDYHSPYTMDCHRAKASLAGT) the chain is on the extracellular side. The helical transmembrane segment at 121–141 (LSLMLVSTVLEFCLAVLTAVL) threads the bilayer. Over 142–147 (QWKQTV) the chain is Cytoplasmic.

This sequence belongs to the MS4A family. Expressed by malignant and fetal tissue at very low levels.

It localises to the membrane. Functionally, may be involved in signal transduction as a component of a multimeric receptor complex. The sequence is that of Membrane-spanning 4-domains subfamily A member 6E (MS4A6E) from Homo sapiens (Human).